The chain runs to 373 residues: MTSTPIIPADLLPADGRFGCGPSKVRPEQLQSLVEVGSSVFGTSHRQKPVKDVVASVRSGLADLFSLPEGYEVVLGNGGTTAFWDAAAFGLIREKSLHLTNGEFSSKFASVAKNNPFIGDPIVVSADPGSAPEPVSDPSVDLIGWAHNETSTGVAIPVSRPAGSENALIAIDATSGAGGLPVNVADADVYYFAPQKCFAADGGLWIALMSPKALERVAEIKDSGRWTPDFLSLPIAVDNSSKDQTYNTPAVATLLLLANQIDWLNGKGGLDWATSRTADSSSRLYQWAEASEYATPFVTDPAHRSQVVGTIDFDDKIDAAQVAKILRANGVVDTEPYRKLGRNQLRVGMFPAIDPEDVSQLTKSIDWVVSQLG.

Residue arginine 46 participates in L-glutamate binding. 4 residues coordinate pyridoxal 5'-phosphate: phenylalanine 104, threonine 150, aspartate 172, and glutamine 195. Lysine 196 bears the N6-(pyridoxal phosphate)lysine mark. Residue 247 to 248 participates in pyridoxal 5'-phosphate binding; that stretch reads NT.

The protein belongs to the class-V pyridoxal-phosphate-dependent aminotransferase family. SerC subfamily. Homodimer. The cofactor is pyridoxal 5'-phosphate.

Its subcellular location is the cytoplasm. It catalyses the reaction O-phospho-L-serine + 2-oxoglutarate = 3-phosphooxypyruvate + L-glutamate. The enzyme catalyses 4-(phosphooxy)-L-threonine + 2-oxoglutarate = (R)-3-hydroxy-2-oxo-4-phosphooxybutanoate + L-glutamate. Its pathway is amino-acid biosynthesis; L-serine biosynthesis; L-serine from 3-phospho-D-glycerate: step 2/3. It participates in cofactor biosynthesis; pyridoxine 5'-phosphate biosynthesis; pyridoxine 5'-phosphate from D-erythrose 4-phosphate: step 3/5. Catalyzes the reversible conversion of 3-phosphohydroxypyruvate to phosphoserine and of 3-hydroxy-2-oxo-4-phosphonooxybutanoate to phosphohydroxythreonine. This chain is Phosphoserine aminotransferase, found in Rhodococcus opacus (strain B4).